The primary structure comprises 254 residues: Phosphoribosylaminoimidazole-succinocarboxamide synthase (254 aa).

Belongs to the SAICAR synthetase family.

It catalyses the reaction 5-amino-1-(5-phospho-D-ribosyl)imidazole-4-carboxylate + L-aspartate + ATP = (2S)-2-[5-amino-1-(5-phospho-beta-D-ribosyl)imidazole-4-carboxamido]succinate + ADP + phosphate + 2 H(+). The protein operates within purine metabolism; IMP biosynthesis via de novo pathway; 5-amino-1-(5-phospho-D-ribosyl)imidazole-4-carboxamide from 5-amino-1-(5-phospho-D-ribosyl)imidazole-4-carboxylate: step 1/2. This chain is Phosphoribosylaminoimidazole-succinocarboxamide synthase, found in Sinorhizobium medicae (strain WSM419) (Ensifer medicae).